Consider the following 346-residue polypeptide: Elongation factor 1-alpha (346 aa).

The tr-type G domain maps to 1–127 (GTSQADVALL…DNVEPPKRPS (127 aa)). 49-52 (NKMD) contributes to the GTP binding site.

This sequence belongs to the TRAFAC class translation factor GTPase superfamily. Classic translation factor GTPase family. EF-Tu/EF-1A subfamily.

It localises to the cytoplasm. Functionally, this protein promotes the GTP-dependent binding of aminoacyl-tRNA to the A-site of ribosomes during protein biosynthesis. The protein is Elongation factor 1-alpha of Eimeria bovis.